We begin with the raw amino-acid sequence, 203 residues long: MDKAFDEIIGNSHTDSSSNHKVTRYRRRDLRNELGPRLGFAPSDAASRSKDRLYREREEPPLPKRIRISKIPLDVSDYTLDDMIKEFGSPIFSKIFDNKEDRTCIYEFEDPEVLEKIVERYNGHELHNAKIEVEIYQPQRKHSRMNAHNRRKQTAQEHGRGRPGSHYRQKPNRVSKKNKGREKNNTPTSVEALDAELDAYMKG.

Met-1 bears the N-acetylmethionine mark. Disordered stretches follow at residues 1–60 (MDKA…REEP) and 137–203 (QPQR…YMKG). Polar residues predominate over residues 11–20 (NSHTDSSSNH). Residues 47 to 60 (SRSKDRLYREREEP) show a composition bias toward basic and acidic residues. In terms of domain architecture, RRM spans 64 to 138 (KRIRISKIPL…AKIEVEIYQP (75 aa)). Basic residues-rich tracts occupy residues 139-153 (QRKH…RRKQ) and 161-180 (GRPG…KNKG).

Belongs to the YRA1 family. Associates with mRNPs. Interacts with YRA1.

It localises to the nucleus. Functionally, involved in export of poly(A) mRNAs from the nucleus. Recruited to the coding sequences as well as poly-A sites of active genes. This Saccharomyces cerevisiae (strain JAY291) (Baker's yeast) protein is RNA annealing protein YRA2 (YRA2).